The primary structure comprises 314 residues: 4-hydroxy-3-methylbut-2-enyl diphosphate reductase (314 aa).

A [4Fe-4S] cluster-binding site is contributed by cysteine 12. (2E)-4-hydroxy-3-methylbut-2-enyl diphosphate-binding residues include histidine 41 and histidine 74. Positions 41 and 74 each coordinate dimethylallyl diphosphate. 2 residues coordinate isopentenyl diphosphate: histidine 41 and histidine 74. Cysteine 96 contacts [4Fe-4S] cluster. Histidine 124 is a (2E)-4-hydroxy-3-methylbut-2-enyl diphosphate binding site. Histidine 124 contributes to the dimethylallyl diphosphate binding site. Isopentenyl diphosphate is bound at residue histidine 124. The active-site Proton donor is glutamate 126. (2E)-4-hydroxy-3-methylbut-2-enyl diphosphate is bound at residue threonine 167. Cysteine 197 is a binding site for [4Fe-4S] cluster. (2E)-4-hydroxy-3-methylbut-2-enyl diphosphate-binding residues include serine 225, serine 226, asparagine 227, and serine 269. 4 residues coordinate dimethylallyl diphosphate: serine 225, serine 226, asparagine 227, and serine 269. Isopentenyl diphosphate-binding residues include serine 225, serine 226, asparagine 227, and serine 269.

This sequence belongs to the IspH family. It depends on [4Fe-4S] cluster as a cofactor.

The catalysed reaction is isopentenyl diphosphate + 2 oxidized [2Fe-2S]-[ferredoxin] + H2O = (2E)-4-hydroxy-3-methylbut-2-enyl diphosphate + 2 reduced [2Fe-2S]-[ferredoxin] + 2 H(+). It carries out the reaction dimethylallyl diphosphate + 2 oxidized [2Fe-2S]-[ferredoxin] + H2O = (2E)-4-hydroxy-3-methylbut-2-enyl diphosphate + 2 reduced [2Fe-2S]-[ferredoxin] + 2 H(+). It participates in isoprenoid biosynthesis; dimethylallyl diphosphate biosynthesis; dimethylallyl diphosphate from (2E)-4-hydroxy-3-methylbutenyl diphosphate: step 1/1. It functions in the pathway isoprenoid biosynthesis; isopentenyl diphosphate biosynthesis via DXP pathway; isopentenyl diphosphate from 1-deoxy-D-xylulose 5-phosphate: step 6/6. Its function is as follows. Catalyzes the conversion of 1-hydroxy-2-methyl-2-(E)-butenyl 4-diphosphate (HMBPP) into a mixture of isopentenyl diphosphate (IPP) and dimethylallyl diphosphate (DMAPP). Acts in the terminal step of the DOXP/MEP pathway for isoprenoid precursor biosynthesis. The sequence is that of 4-hydroxy-3-methylbut-2-enyl diphosphate reductase from Aliivibrio salmonicida (strain LFI1238) (Vibrio salmonicida (strain LFI1238)).